Here is a 238-residue protein sequence, read N- to C-terminus: Ribitol-5-phosphate cytidylyltransferase 2 (238 aa).

CTP is bound by residues 7–10 (LAGG) and 81–87 (GTDRNET).

The protein belongs to the IspD/TarI cytidylyltransferase family. TarI subfamily.

It carries out the reaction D-ribitol 5-phosphate + CTP + H(+) = CDP-L-ribitol + diphosphate. The protein operates within cell wall biogenesis; poly(ribitol phosphate) teichoic acid biosynthesis. In terms of biological role, catalyzes the transfer of the cytidylyl group of CTP to D-ribitol 5-phosphate. In Staphylococcus aureus (strain MSSA476), this protein is Ribitol-5-phosphate cytidylyltransferase 2.